A 201-amino-acid polypeptide reads, in one-letter code: MSISPAIDQLVENLKRLPGVGQKSAQRMAFHLLERDRGGASRLAESLQSAVEKVGHCECCRTLTEEPLCRICSNPMRRENGVLCIVETPADVLAIEQTSQFQGRYFVLMGHLSPLDGIGPADIGLDELERQLQSEPVEEIVLATNPTVEGDATAHYIADIAAQLNINTTRIAHGVPVGGELGYVDQTTLGHAFSGRKQFSR.

The segment at cysteine 57 to cysteine 72 adopts a C4-type zinc-finger fold. In terms of domain architecture, Toprim spans glycine 81–proline 176.

The protein belongs to the RecR family.

Its function is as follows. May play a role in DNA repair. It seems to be involved in an RecBC-independent recombinational process of DNA repair. It may act with RecF and RecO. The polypeptide is Recombination protein RecR (Idiomarina loihiensis (strain ATCC BAA-735 / DSM 15497 / L2-TR)).